The chain runs to 388 residues: Chorismate synthase (388 aa).

NADP(+) contacts are provided by Arg-39 and Arg-45. FMN contacts are provided by residues 132 to 134 (RSS), 251 to 252 (NA), Gly-296, 311 to 315 (KPIPT), and Arg-337.

It belongs to the chorismate synthase family. As to quaternary structure, homotetramer. FMNH2 is required as a cofactor.

It catalyses the reaction 5-O-(1-carboxyvinyl)-3-phosphoshikimate = chorismate + phosphate. It participates in metabolic intermediate biosynthesis; chorismate biosynthesis; chorismate from D-erythrose 4-phosphate and phosphoenolpyruvate: step 7/7. In terms of biological role, catalyzes the anti-1,4-elimination of the C-3 phosphate and the C-6 proR hydrogen from 5-enolpyruvylshikimate-3-phosphate (EPSP) to yield chorismate, which is the branch point compound that serves as the starting substrate for the three terminal pathways of aromatic amino acid biosynthesis. This reaction introduces a second double bond into the aromatic ring system. The sequence is that of Chorismate synthase from Staphylococcus aureus (strain MW2).